An 89-amino-acid polypeptide reads, in one-letter code: Small ribosomal subunit protein uS15 (89 aa).

The segment covering 1 to 13 (MTISKERKEEVIS) has biased composition (basic and acidic residues). The tract at residues 1–24 (MTISKERKEEVISEHGAAAGDTGS) is disordered.

This sequence belongs to the universal ribosomal protein uS15 family. As to quaternary structure, part of the 30S ribosomal subunit. Forms a bridge to the 50S subunit in the 70S ribosome, contacting the 23S rRNA.

One of the primary rRNA binding proteins, it binds directly to 16S rRNA where it helps nucleate assembly of the platform of the 30S subunit by binding and bridging several RNA helices of the 16S rRNA. In terms of biological role, forms an intersubunit bridge (bridge B4) with the 23S rRNA of the 50S subunit in the ribosome. In Rhodopirellula baltica (strain DSM 10527 / NCIMB 13988 / SH1), this protein is Small ribosomal subunit protein uS15.